Reading from the N-terminus, the 1004-residue chain is Retrovirus-related Pol polyprotein from type-1 retrotransposable element R1 (1004 aa).

Positions 450 to 717 (QCLLESYFPQ…SEVKHLGIFV (268 aa)) constitute a Reverse transcriptase domain. The segment at 853-1004 (LSGSQFKELL…RLMRGMRIRE (152 aa)) is nucleic acid-binding endonuclease.

The catalysed reaction is DNA(n) + a 2'-deoxyribonucleoside 5'-triphosphate = DNA(n+1) + diphosphate. The sequence is that of Retrovirus-related Pol polyprotein from type-1 retrotransposable element R1 from Bradysia coprophila (Dark-winged fungus gnat).